Reading from the N-terminus, the 494-residue chain is MAEIEELNDQMKVRREKMENLRDAGIDPFGHKFTRTHNSQELHEAYDEKTKEELHELALSGIVAGRLMTKRGKGKVGFAHLQDREGQIQLYVRKDEVGEENYEIFKKADLGDFLGVEGEIMKTDMGELSIKAKKLTFLSKALRPLPEKFHGLTDTETRYRKRYLDLISNKESFNRFVTRSKIISEIRRYMDGRGYLEVETPVLNNEAGGASARPFYTHHNSLDIDMALRIATELHLKRLIVGGMEKVYELGRVFRNEGMDMTHNPEFTTMESYEAYADFEDIMDLTEGIFQHVAKTVVGQDVLEYDGKEINVGGKFKRVHMVDAIKEVAGVDFWPEMTFEEATALAKEHDIHVEKHFTSVGHIINEFFEKYVEETLIQPTFVFGHPKEISPLAKMNEKDPRFTDRFELFINGKEYANAFSELNDPIDQLERFEAQAKAKELGDDEATGVDYDYVEALEHGMPPTGGLGIGIDRLVMLFTGTTSIRDVLLFPTMK.

E407 and E414 together coordinate Mg(2+).

The protein belongs to the class-II aminoacyl-tRNA synthetase family. As to quaternary structure, homodimer. Requires Mg(2+) as cofactor.

The protein localises to the cytoplasm. The enzyme catalyses tRNA(Lys) + L-lysine + ATP = L-lysyl-tRNA(Lys) + AMP + diphosphate. The polypeptide is Lysine--tRNA ligase (Lactococcus lactis subsp. cremoris (strain MG1363)).